The chain runs to 285 residues: Geranyl diphosphate 2-C-methyltransferase (285 aa).

It belongs to the geranyl diphosphate 2-C-methyltransferase family. The cofactor is Mg(2+).

It catalyses the reaction (2E)-geranyl diphosphate + S-adenosyl-L-methionine = (E)-2-methylgeranyl diphosphate + S-adenosyl-L-homocysteine + H(+). Catalyzes the SAM-dependent methylation of geranyl diphosphate (GPP) to yield (E)-2-methylgeranyl diphosphate (2-MeGPP). In Saccharopolyspora erythraea (strain ATCC 11635 / DSM 40517 / JCM 4748 / NBRC 13426 / NCIMB 8594 / NRRL 2338), this protein is Geranyl diphosphate 2-C-methyltransferase.